The primary structure comprises 36 residues: Photosystem II reaction center protein Y (36 aa).

Topologically, residues 1–4 (MDSR) are lumenal. A helical membrane pass occupies residues 5–23 (LLIVLIPVLAAASWAVYNI). The Stromal portion of the chain corresponds to 24-36 (GRVALQQFRKMTS).

This sequence belongs to the PsbY family. As to quaternary structure, PSII is composed of 1 copy each of membrane proteins PsbA, PsbB, PsbC, PsbD, PsbE, PsbF, PsbH, PsbI, PsbJ, PsbK, PsbL, PsbM, PsbT, PsbX, PsbY, PsbZ, Psb30/Ycf12, at least 3 peripheral proteins of the oxygen-evolving complex and a large number of cofactors. It forms dimeric complexes.

The protein localises to the plastid. It is found in the chloroplast thylakoid membrane. Functionally, loosely associated component of the core of photosystem II (PSII), it is not always seen in crystals. PSII is a light-driven water plastoquinone oxidoreductase, using light energy to abstract electrons from H(2)O, generating a proton gradient subsequently used for ATP formation. In Porphyra purpurea (Red seaweed), this protein is Photosystem II reaction center protein Y.